The sequence spans 199 residues: Holliday junction branch migration complex subunit RuvA (199 aa).

The domain I stretch occupies residues 1–64 (MIGRLRGILL…DDAHLLYAFA (64 aa)). The domain II stretch occupies residues 65–143 (SEKERGLFRS…DMPESGVAGM (79 aa)). The tract at residues 144–150 (RPDRVDG) is flexible linker. The segment at 151–199 (SAPGTVAEAVSALVALGYKPNEASRAVRRLDTEALTTEEIIRQALQRML) is domain III.

It belongs to the RuvA family. In terms of assembly, homotetramer. Forms an RuvA(8)-RuvB(12)-Holliday junction (HJ) complex. HJ DNA is sandwiched between 2 RuvA tetramers; dsDNA enters through RuvA and exits via RuvB. An RuvB hexamer assembles on each DNA strand where it exits the tetramer. Each RuvB hexamer is contacted by two RuvA subunits (via domain III) on 2 adjacent RuvB subunits; this complex drives branch migration. In the full resolvosome a probable DNA-RuvA(4)-RuvB(12)-RuvC(2) complex forms which resolves the HJ.

Its subcellular location is the cytoplasm. Functionally, the RuvA-RuvB-RuvC complex processes Holliday junction (HJ) DNA during genetic recombination and DNA repair, while the RuvA-RuvB complex plays an important role in the rescue of blocked DNA replication forks via replication fork reversal (RFR). RuvA specifically binds to HJ cruciform DNA, conferring on it an open structure. The RuvB hexamer acts as an ATP-dependent pump, pulling dsDNA into and through the RuvAB complex. HJ branch migration allows RuvC to scan DNA until it finds its consensus sequence, where it cleaves and resolves the cruciform DNA. The chain is Holliday junction branch migration complex subunit RuvA from Nitrosococcus oceani (strain ATCC 19707 / BCRC 17464 / JCM 30415 / NCIMB 11848 / C-107).